The primary structure comprises 123 residues: MARIAGVDLPKNKRMDIALTYIFGIGRTTALRILESTGVDWTKNSDALTSEETNNIRKELEANYKVEGDLRREITAGIKRLMDIGCYRGLRHRRGLPCRGQRTHTNSRTRKGPRRGVMAKKKK.

A disordered region spans residues 97–123 (PCRGQRTHTNSRTRKGPRRGVMAKKKK).

It belongs to the universal ribosomal protein uS13 family. In terms of assembly, part of the 30S ribosomal subunit. Forms a loose heterodimer with protein S19. Forms two bridges to the 50S subunit in the 70S ribosome.

Its function is as follows. Located at the top of the head of the 30S subunit, it contacts several helices of the 16S rRNA. In the 70S ribosome it contacts the 23S rRNA (bridge B1a) and protein L5 of the 50S subunit (bridge B1b), connecting the 2 subunits; these bridges are implicated in subunit movement. Contacts the tRNAs in the A and P-sites. In Solidesulfovibrio magneticus (strain ATCC 700980 / DSM 13731 / RS-1) (Desulfovibrio magneticus), this protein is Small ribosomal subunit protein uS13.